Reading from the N-terminus, the 452-residue chain is Coproporphyrinogen III oxidase (452 aa).

FAD-binding positions include 10–15 (GGGISG), 36–37 (EP), 58–61 (GAEA), Val-242, Trp-390, and 426–428 (IGV).

This sequence belongs to the protoporphyrinogen/coproporphyrinogen oxidase family. Coproporphyrinogen III oxidase subfamily. It depends on FAD as a cofactor.

It is found in the cytoplasm. The catalysed reaction is coproporphyrinogen III + 3 O2 = coproporphyrin III + 3 H2O2. It participates in porphyrin-containing compound metabolism; protoheme biosynthesis. Its function is as follows. Involved in coproporphyrin-dependent heme b biosynthesis. Catalyzes the oxidation of coproporphyrinogen III to coproporphyrin III. The sequence is that of Coproporphyrinogen III oxidase from Mycobacterium bovis (strain ATCC BAA-935 / AF2122/97).